Consider the following 46-residue polypeptide: Myoregulin (46 aa).

The Cytoplasmic portion of the chain corresponds to 1–21; sequence MTGKNWILISTTTPKSLEDEI. Residues 22–42 form a helical membrane-spanning segment; it reads VGRLLKILFVIFVDLISIIYV. At 43–46 the chain is on the lumenal side; sequence VITS.

In terms of assembly, homooligomer. Monomer. Interacts with ATP2A1/SERCA1. Interacts as a monomer with ATP2A2/SERCA2; the interaction inhibits ATP2A2 activity.

The protein localises to the sarcoplasmic reticulum membrane. Inhibits the activity of ATP2A1/SERCA1 ATPase in sarcoplasmic reticulum by decreasing the apparent affinity of the ATPase for Ca(2+), thereby acting as a key regulator of skeletal muscle activity. Its high expression in adult skeletal muscle, suggests that it constitutes the predominant regulator of ATP2A1/SERCA1 in adult skeletal muscle. Also inhibits the activity of ATP2A2/SERCA2 and ATP2A3/SERCA3. The sequence is that of Myoregulin from Homo sapiens (Human).